Reading from the N-terminus, the 93-residue chain is Neutrophil cationic peptide 2 (93 aa).

An N-terminal signal peptide occupies residues 1 to 19; that stretch reads MRTVPLFAACLLLTLMAQA. Residues 20-62 constitute a propeptide that is removed on maturation; that stretch reads EPLPRAADHSDTKMKGDREDHVAVISFWEEESTSLQDAGAGAG. Intrachain disulfides connect cysteine 65–cysteine 93, cysteine 67–cysteine 82, and cysteine 72–cysteine 92.

It belongs to the alpha-defensin family.

The protein resides in the secreted. Its function is as follows. Has antibiotic, anti-fungi and antiviral activity. This chain is Neutrophil cationic peptide 2, found in Cavia porcellus (Guinea pig).